A 398-amino-acid chain; its full sequence is Probable L-tyrosine/L-aspartate decarboxylase (398 aa).

N6-(pyridoxal phosphate)lysine is present on lysine 242.

The protein belongs to the group II decarboxylase family. MfnA subfamily. Requires pyridoxal 5'-phosphate as cofactor.

It carries out the reaction L-tyrosine + H(+) = tyramine + CO2. It catalyses the reaction L-aspartate + H(+) = beta-alanine + CO2. Its pathway is cofactor biosynthesis; methanofuran biosynthesis. It participates in cofactor biosynthesis; coenzyme A biosynthesis. Its function is as follows. Catalyzes the decarboxylation of L-tyrosine to produce tyramine for methanofuran biosynthesis. Can also catalyze the decarboxylation of L-aspartate to produce beta-alanine for coenzyme A (CoA) biosynthesis. The sequence is that of Probable L-tyrosine/L-aspartate decarboxylase from Methanosarcina mazei (strain ATCC BAA-159 / DSM 3647 / Goe1 / Go1 / JCM 11833 / OCM 88) (Methanosarcina frisia).